Consider the following 84-residue polypeptide: uncharacterized protein (84 aa).

Over residues 34 to 54 (ATSTASSSAAKNTTSSSKNAA) the composition is skewed to low complexity. Residues 34–57 (ATSTASSSAAKNTTSSSKNAAPGM) form a disordered region. Asn45 carries N-linked (GlcNAc...) asparagine glycosylation. The helical transmembrane segment at 66–83 (YGIIMAAFAAVSFVLGTG) threads the bilayer.

It is found in the endoplasmic reticulum membrane. This is an uncharacterized protein from Saccharomyces cerevisiae (strain ATCC 204508 / S288c) (Baker's yeast).